Reading from the N-terminus, the 429-residue chain is Threonine synthase (429 aa).

N6-(pyridoxal phosphate)lysine is present on Lys-108.

This sequence belongs to the threonine synthase family. It depends on pyridoxal 5'-phosphate as a cofactor.

The enzyme catalyses O-phospho-L-homoserine + H2O = L-threonine + phosphate. Its pathway is amino-acid biosynthesis; L-threonine biosynthesis; L-threonine from L-aspartate: step 5/5. In terms of biological role, catalyzes the gamma-elimination of phosphate from L-phosphohomoserine and the beta-addition of water to produce L-threonine. This Buchnera aphidicola subsp. Acyrthosiphon pisum (strain APS) (Acyrthosiphon pisum symbiotic bacterium) protein is Threonine synthase (thrC).